The chain runs to 91 residues: Cell division protein ZapA (91 aa).

Residues 59 to 86 (TAVNIANEYLKLKEEYDRLAAKLRREKG) adopt a coiled-coil conformation.

The protein belongs to the ZapA family. Type 2 subfamily. As to quaternary structure, homodimer. Interacts with FtsZ.

The protein localises to the cytoplasm. Functionally, activator of cell division through the inhibition of FtsZ GTPase activity, therefore promoting FtsZ assembly into bundles of protofilaments necessary for the formation of the division Z ring. It is recruited early at mid-cell but it is not essential for cell division. The sequence is that of Cell division protein ZapA from Geobacillus thermodenitrificans (strain NG80-2).